The following is a 418-amino-acid chain: tRNA(Met) cytidine acetate ligase (418 aa).

The ATP site is built by glycine 95, asparagine 161, and arginine 186.

This sequence belongs to the TmcAL family.

The protein resides in the cytoplasm. It carries out the reaction cytidine(34) in elongator tRNA(Met) + acetate + ATP = N(4)-acetylcytidine(34) in elongator tRNA(Met) + AMP + diphosphate. Catalyzes the formation of N(4)-acetylcytidine (ac(4)C) at the wobble position of elongator tRNA(Met), using acetate and ATP as substrates. First activates an acetate ion to form acetyladenylate (Ac-AMP) and then transfers the acetyl group to tRNA to form ac(4)C34. The protein is tRNA(Met) cytidine acetate ligase of Thermotoga maritima (strain ATCC 43589 / DSM 3109 / JCM 10099 / NBRC 100826 / MSB8).